The primary structure comprises 224 residues: Thiamine-phosphate synthase (224 aa).

4-amino-2-methyl-5-(diphosphooxymethyl)pyrimidine contacts are provided by residues 43–47 (QYRPK) and Asn75. Asp76 and Asp95 together coordinate Mg(2+). Ser114 lines the 4-amino-2-methyl-5-(diphosphooxymethyl)pyrimidine pocket. 141 to 143 (SAT) lines the 2-[(2R,5Z)-2-carboxy-4-methylthiazol-5(2H)-ylidene]ethyl phosphate pocket. Lys144 lines the 4-amino-2-methyl-5-(diphosphooxymethyl)pyrimidine pocket. 2-[(2R,5Z)-2-carboxy-4-methylthiazol-5(2H)-ylidene]ethyl phosphate is bound at residue Gly171.

It belongs to the thiamine-phosphate synthase family. It depends on Mg(2+) as a cofactor.

It carries out the reaction 2-[(2R,5Z)-2-carboxy-4-methylthiazol-5(2H)-ylidene]ethyl phosphate + 4-amino-2-methyl-5-(diphosphooxymethyl)pyrimidine + 2 H(+) = thiamine phosphate + CO2 + diphosphate. The catalysed reaction is 2-(2-carboxy-4-methylthiazol-5-yl)ethyl phosphate + 4-amino-2-methyl-5-(diphosphooxymethyl)pyrimidine + 2 H(+) = thiamine phosphate + CO2 + diphosphate. It catalyses the reaction 4-methyl-5-(2-phosphooxyethyl)-thiazole + 4-amino-2-methyl-5-(diphosphooxymethyl)pyrimidine + H(+) = thiamine phosphate + diphosphate. The protein operates within cofactor biosynthesis; thiamine diphosphate biosynthesis; thiamine phosphate from 4-amino-2-methyl-5-diphosphomethylpyrimidine and 4-methyl-5-(2-phosphoethyl)-thiazole: step 1/1. Condenses 4-methyl-5-(beta-hydroxyethyl)thiazole monophosphate (THZ-P) and 2-methyl-4-amino-5-hydroxymethyl pyrimidine pyrophosphate (HMP-PP) to form thiamine monophosphate (TMP). This Methylococcus capsulatus (strain ATCC 33009 / NCIMB 11132 / Bath) protein is Thiamine-phosphate synthase.